The primary structure comprises 61 residues: Large ribosomal subunit protein bL32 (61 aa).

A disordered region spans residues 1-22 (MAVPKQKSSKSRGRKRRTHQKV). The span at 7-20 (KSSKSRGRKRRTHQ) shows a compositional bias: basic residues.

The protein belongs to the bacterial ribosomal protein bL32 family.

The chain is Large ribosomal subunit protein bL32 from Desulforapulum autotrophicum (strain ATCC 43914 / DSM 3382 / VKM B-1955 / HRM2) (Desulfobacterium autotrophicum).